The chain runs to 453 residues: DNA repair protein RadA (453 aa).

The C4-type zinc-finger motif lies at 11–28 (CNQCGATAPKWLGQCPGC). 93–100 (GDPGIGKS) provides a ligand contact to ATP. The short motif at 250 to 254 (KNRFG) is the RadA KNRFG motif element. The segment at 349-453 (DVFLSITGGL…TIKDAIRLLL (105 aa)) is lon-protease-like.

This sequence belongs to the RecA family. RadA subfamily.

DNA-dependent ATPase involved in processing of recombination intermediates, plays a role in repairing DNA breaks. Stimulates the branch migration of RecA-mediated strand transfer reactions, allowing the 3' invading strand to extend heteroduplex DNA faster. Binds ssDNA in the presence of ADP but not other nucleotides, has ATPase activity that is stimulated by ssDNA and various branched DNA structures, but inhibited by SSB. Does not have RecA's homology-searching function. This Chlamydia pneumoniae (Chlamydophila pneumoniae) protein is DNA repair protein RadA.